We begin with the raw amino-acid sequence, 281 residues long: sn-glycerol-3-phosphate transport system permease protein UgpE (281 aa).

6 helical membrane passes run 16–36, 85–105, 113–133, 142–162, 202–222, and 247–267; these read LILG…AATL, FSIT…IVWF, FFWM…FPTV, LDSY…TFLF, ALFV…LLII, and WNSV…IVLV. Residues 77 to 268 form the ABC transmembrane type-1 domain; sequence LLNSFVMAFS…IPPVVIVLVM (192 aa).

This sequence belongs to the binding-protein-dependent transport system permease family. UgpAE subfamily. The complex is composed of two ATP-binding proteins (UgpC), two transmembrane proteins (UgpA and UgpE) and a solute-binding protein (UgpB).

Its subcellular location is the cell inner membrane. Functionally, part of the ABC transporter complex UgpBAEC involved in sn-glycerol-3-phosphate (G3P) import. Probably responsible for the translocation of the substrate across the membrane. In Escherichia coli O6:K15:H31 (strain 536 / UPEC), this protein is sn-glycerol-3-phosphate transport system permease protein UgpE (ugpE).